Reading from the N-terminus, the 271-residue chain is Digeranylgeranylglyceryl phosphate synthase (271 aa).

8 helical membrane passes run 11 to 31 (INCA…GARL), 33 to 53 (VGAV…NAIN), 88 to 108 (FAVG…IAAL), 125 to 145 (LIGN…GAAV), 149 to 169 (PAPA…REIL), 201 to 221 (VFAI…VVGW), 224 to 244 (LVLA…AVAG), and 251 to 271 (AQRV…ASLL).

The protein belongs to the UbiA prenyltransferase family. DGGGP synthase subfamily. Requires Mg(2+) as cofactor.

It is found in the cell membrane. The enzyme catalyses sn-3-O-(geranylgeranyl)glycerol 1-phosphate + (2E,6E,10E)-geranylgeranyl diphosphate = 2,3-bis-O-(geranylgeranyl)-sn-glycerol 1-phosphate + diphosphate. It functions in the pathway membrane lipid metabolism; glycerophospholipid metabolism. Its function is as follows. Prenyltransferase that catalyzes the transfer of the geranylgeranyl moiety of geranylgeranyl diphosphate (GGPP) to the C2 hydroxyl of (S)-3-O-geranylgeranylglyceryl phosphate (GGGP). This reaction is the second ether-bond-formation step in the biosynthesis of archaeal membrane lipids. The protein is Digeranylgeranylglyceryl phosphate synthase of Methanopyrus kandleri (strain AV19 / DSM 6324 / JCM 9639 / NBRC 100938).